Reading from the N-terminus, the 111-residue chain is Large ribosomal subunit protein uL24 (111 aa).

The disordered stretch occupies residues 85–111 (NTNDPRRKDIINRKASRQKEEQGGKAQ). The span at 88 to 111 (DPRRKDIINRKASRQKEEQGGKAQ) shows a compositional bias: basic and acidic residues.

This sequence belongs to the universal ribosomal protein uL24 family. In terms of assembly, part of the 50S ribosomal subunit.

One of two assembly initiator proteins, it binds directly to the 5'-end of the 23S rRNA, where it nucleates assembly of the 50S subunit. Functionally, located at the polypeptide exit tunnel on the outside of the subunit. In Metallosphaera sedula (strain ATCC 51363 / DSM 5348 / JCM 9185 / NBRC 15509 / TH2), this protein is Large ribosomal subunit protein uL24.